Here is a 137-residue protein sequence, read N- to C-terminus: Fibroblast growth factor 2 (137 aa).

A heparin-binding site is contributed by Asn27. Position 73 is a phosphotyrosine; by TEC (Tyr73). A Glycyl lysine isopeptide (Lys-Gly) (interchain with G-Cter in SUMO1) cross-link involves residue Lys86. Positions 119 to 135 (KRTGQYKLGSKTGPGQK) are heparin-binding.

The protein belongs to the heparin-binding growth factors family. As to quaternary structure, monomer. Homodimer. Interacts with FGFR1, FGFR2, FGFR3 and FGFR4. Affinity between fibroblast growth factors (FGFs) and their receptors is increased by heparan sulfate glycosaminoglycans that function as coreceptors. Interacts with CSPG4, FGFBP1 and TEC. Found in a complex with FGFBP1, FGF1 and FGF2. Interacts with FGFBP3. Interacts with integrin ITGAV:ITGB3; the interaction is required for FGF2 signaling. Interacts with SNORC (via the extracellular domain). Interacts with glypican GPC3. In terms of processing, phosphorylation at Tyr-73 regulates FGF2 unconventional secretion.

Its subcellular location is the secreted. The protein resides in the nucleus. Functionally, acts as a ligand for FGFR1, FGFR2, FGFR3 and FGFR4. Also acts as an integrin ligand which is required for FGF2 signaling. Binds to integrin ITGAV:ITGB3. Plays an important role in the regulation of cell survival, cell division, cell differentiation and cell migration. Functions as a potent mitogen in vitro. Can induce angiogenesis. Mediates phosphorylation of ERK1/2 and thereby promotes retinal lens fiber differentiation. This Oryctolagus cuniculus (Rabbit) protein is Fibroblast growth factor 2 (FGF2).